The primary structure comprises 351 residues: Protein RecA (351 aa).

An ATP-binding site is contributed by 73–80 (GPESSGKT).

Belongs to the RecA family.

It is found in the cytoplasm. Functionally, can catalyze the hydrolysis of ATP in the presence of single-stranded DNA, the ATP-dependent uptake of single-stranded DNA by duplex DNA, and the ATP-dependent hybridization of homologous single-stranded DNAs. It interacts with LexA causing its activation and leading to its autocatalytic cleavage. The chain is Protein RecA from Oleidesulfovibrio alaskensis (strain ATCC BAA-1058 / DSM 17464 / G20) (Desulfovibrio alaskensis).